We begin with the raw amino-acid sequence, 72 residues long: Protein RALF-like 36 (72 aa).

An N-terminal signal peptide occupies residues 1–27; sequence MGISKKTVVQSFALIIIISIVMSTTEA. 2 disulfide bridges follow: C43-C51 and C63-C69.

It belongs to the plant rapid alkalinization factor (RALF) family.

It is found in the secreted. In terms of biological role, cell signaling peptide that may regulate plant stress, growth, and development. Mediates a rapid alkalinization of extracellular space by mediating a transient increase in the cytoplasmic Ca(2+) concentration leading to a calcium-dependent signaling events through a cell surface receptor and a concomitant activation of some intracellular mitogen-activated protein kinases. The sequence is that of Protein RALF-like 36 from Arabidopsis thaliana (Mouse-ear cress).